The chain runs to 144 residues: Kunitz-type elastase inhibitor BrEI (144 aa).

Residue Asn38 is glycosylated (N-linked (GlcNAc...) asparagine). Residues Cys41 and Cys88 are joined by a disulfide bond.

Belongs to the leguminous Kunitz-type inhibitor family.

In terms of biological role, inhibitor of porcine pancreatic elastase with a Ki of 27 nM. Does not inhibit human neutrophil elastase, bovine trypsin, human plasma kallikrein or porcine pancreatic kallikrein. This Bauhinia rufa (Orchid tree) protein is Kunitz-type elastase inhibitor BrEI.